We begin with the raw amino-acid sequence, 409 residues long: Peptidase T (409 aa).

Histidine 78 provides a ligand contact to Zn(2+). Aspartate 80 is a catalytic residue. Aspartate 140 provides a ligand contact to Zn(2+). Catalysis depends on glutamate 174, which acts as the Proton acceptor. Residues glutamate 175, aspartate 197, and histidine 379 each contribute to the Zn(2+) site.

It belongs to the peptidase M20B family. Zn(2+) serves as cofactor.

The protein resides in the cytoplasm. The catalysed reaction is Release of the N-terminal residue from a tripeptide.. Functionally, cleaves the N-terminal amino acid of tripeptides. The chain is Peptidase T from Vibrio parahaemolyticus serotype O3:K6 (strain RIMD 2210633).